A 309-amino-acid chain; its full sequence is MSDPNLNDDATEPRGLAADTADDELDIVEAADEQDEFEAAEAEAGEPAEVAALHIEDEGDHIAETDEDIEAGAVETDEDVETDTDEDVEAGTDEDVAVAEAAEEEPAAPVDSIQALREELRTLPGEWYVIHTYAGYENRVKTNLEPRAVSLNVEDYIFQAEVPQEEVVQIKNGDRKTIKQNKLPGYVLVRMDLTNESWGVVRNTPGVTGFVGNAYDPYPLTLDEIVKMLAPEAEEKAARAEGKPAPQRKVEVQVLDFEVGASVTVTDGPFATLQTINEIKSDSKKVKGLVEIFGWETPVELSFDQIQKN.

Disordered stretches follow at residues 1 to 24 (MSDPNLNDDATEPRGLAADTADDE) and 58 to 91 (EGDHIAETDEDIEAGAVETDEDVETDTDEDVEAG). The span at 65 to 91 (TDEDIEAGAVETDEDVETDTDEDVEAG) shows a compositional bias: acidic residues.

This sequence belongs to the NusG family.

In terms of biological role, participates in transcription elongation, termination and antitermination. This Streptomyces galbus protein is Transcription termination/antitermination protein NusG.